The primary structure comprises 367 residues: Adenosine deaminase (367 aa).

Residues His46 and His48 each contribute to the Zn(2+) site. Residues 48–50, Asp176, and Gly205 contribute to the a purine D-ribonucleoside site; that span reads HLD. The interval 174–188 is gating helix loop; regulates binding affinity for substrates and thus substrate selectivity; it reads TGDGGLSHERMKEAA. A Zn(2+)-binding site is contributed by His230. Residues Glu233, His257, and Asp314 each coordinate a purine D-ribonucleoside. Residue Asp314 coordinates Zn(2+).

This sequence belongs to the metallo-dependent hydrolases superfamily. Adenosine and AMP deaminases family. It depends on Zn(2+) as a cofactor.

The catalysed reaction is adenosine + H2O + H(+) = inosine + NH4(+). The enzyme catalyses S-methyl-5'-thioadenosine + H2O + H(+) = S-methyl-5'-thioinosine + NH4(+). The protein operates within purine metabolism; purine nucleoside salvage. With respect to regulation, inhibited by coformycin and methylthiocoformycin (MT-coformycin). In terms of biological role, catalyzes the hydrolytic deamination of adenosine to produce inosine. Unlike mammalian adenosine deaminases, also catalyzes the deamination of 5'-methylthioadenosine (MTA), a by-product of polyamine biosynthesis, to produce 5'-methylthioinosine (MTI). Plays an essential role in the purine salvage pathway which allows the parasite to use host cell purines for the synthesis of nucleic acids. The protein is Adenosine deaminase of Plasmodium falciparum (isolate 3D7).